A 329-amino-acid polypeptide reads, in one-letter code: Phosphate acyltransferase (329 aa).

The protein belongs to the PlsX family. In terms of assembly, homodimer. Probably interacts with PlsY.

Its subcellular location is the cytoplasm. The enzyme catalyses a fatty acyl-[ACP] + phosphate = an acyl phosphate + holo-[ACP]. It functions in the pathway lipid metabolism; phospholipid metabolism. In terms of biological role, catalyzes the reversible formation of acyl-phosphate (acyl-PO(4)) from acyl-[acyl-carrier-protein] (acyl-ACP). This enzyme utilizes acyl-ACP as fatty acyl donor, but not acyl-CoA. The protein is Phosphate acyltransferase of Exiguobacterium sp. (strain ATCC BAA-1283 / AT1b).